The primary structure comprises 135 residues: Small ribosomal subunit protein bS16 (135 aa).

It belongs to the bacterial ribosomal protein bS16 family.

This chain is Small ribosomal subunit protein bS16, found in Prosthecochloris aestuarii (strain DSM 271 / SK 413).